A 79-amino-acid chain; its full sequence is RNA-binding protein Hfq (79 aa).

Positions Asp-10–Val-69 constitute a Sm domain.

This sequence belongs to the Hfq family. In terms of assembly, homohexamer.

RNA chaperone that binds small regulatory RNA (sRNAs) and mRNAs to facilitate mRNA translational regulation in response to envelope stress, environmental stress and changes in metabolite concentrations. Also binds with high specificity to tRNAs. This Burkholderia mallei (strain ATCC 23344) protein is RNA-binding protein Hfq.